A 644-amino-acid polypeptide reads, in one-letter code: Arabinosyltransferase XEG113 (644 aa).

Topologically, residues 1-17 are cytoplasmic; the sequence is MVEGWRNGFRDATNSKP. The chain crosses the membrane as a helical; Signal-anchor for type II membrane protein span at residues 18–38; it reads LFVTIYATVIIGVLVSSFYVF. The Lumenal segment spans residues 39–644; sequence SAIYSPTNGS…QTPEEDHPPL (606 aa). Residues N46 and N70 are each glycosylated (N-linked (GlcNAc...) asparagine). Residues 226 to 228 carry the DXD motif motif; sequence DTD. N446 and N542 each carry an N-linked (GlcNAc...) asparagine glycan.

This sequence belongs to the glycosyltransferase 77 family.

It is found in the golgi apparatus membrane. Functionally, plays a role in the arabinosylation of cell wall components. Involved in the arabinosylation of extensin proteins in root hair cells. Extensins are structural glycoproteins present in cell walls and its arabinosylation is important for cell elongation, root hair cell development, lateral root development and root hair tip growth. This Arabidopsis thaliana (Mouse-ear cress) protein is Arabinosyltransferase XEG113.